The sequence spans 152 residues: Large ribosomal subunit protein uL15 (152 aa).

The segment at 31–58 is disordered; sequence GASCGFGMRGQKSRSGRPTRPGFEGGQM.

Belongs to the universal ribosomal protein uL15 family. In terms of assembly, part of the 50S ribosomal subunit.

Binds to the 23S rRNA. In Parasynechococcus marenigrum (strain WH8102), this protein is Large ribosomal subunit protein uL15.